Reading from the N-terminus, the 317-residue chain is MEYLDFELPIKELLEQLDKCQIIGTESNVDVTETCKQISQKLEDTKKDIYGNLTAWQRVQLSRHPSRPYTLEHITNLTKGTFLELFGDRNFKDDKAMIGGLGKIGDQSFMFVGQQKGINTKMRQFRNFGMPNPEGYRKALRLMKMAEKFNIPVVTLIDTPGAFPGIEAEERGQGEAIARNILEMARLKVPIICVIIGEGASGGALGIGVGDRVLMMENTWYSVISPESCSSILWKSWEYKEQAAEALKLTSADMKRQKIVDDIIPEPLGGAHYDKATAFKTVEEYILKAFNELKDLSTTDLVAQRMDKYSKMGEYNE.

The 256-residue stretch at 37–292 (QISQKLEDTK…EEYILKAFNE (256 aa)) folds into the CoA carboxyltransferase C-terminal domain.

This sequence belongs to the AccA family. In terms of assembly, acetyl-CoA carboxylase is a heterohexamer composed of biotin carboxyl carrier protein (AccB), biotin carboxylase (AccC) and two subunits each of ACCase subunit alpha (AccA) and ACCase subunit beta (AccD).

It localises to the cytoplasm. The enzyme catalyses N(6)-carboxybiotinyl-L-lysyl-[protein] + acetyl-CoA = N(6)-biotinyl-L-lysyl-[protein] + malonyl-CoA. It functions in the pathway lipid metabolism; malonyl-CoA biosynthesis; malonyl-CoA from acetyl-CoA: step 1/1. Component of the acetyl coenzyme A carboxylase (ACC) complex. First, biotin carboxylase catalyzes the carboxylation of biotin on its carrier protein (BCCP) and then the CO(2) group is transferred by the carboxyltransferase to acetyl-CoA to form malonyl-CoA. This is Acetyl-coenzyme A carboxylase carboxyl transferase subunit alpha from Flavobacterium psychrophilum (strain ATCC 49511 / DSM 21280 / CIP 103535 / JIP02/86).